The primary structure comprises 107 residues: Large ribosomal subunit protein eL33A (107 aa).

The residue at position 2 (Ala2) is an N-acetylalanine; partial. Lys47 participates in a covalent cross-link: Glycyl lysine isopeptide (Lys-Gly) (interchain with G-Cter in ubiquitin).

This sequence belongs to the eukaryotic ribosomal protein eL33 family. Component of the large ribosomal subunit (LSU). Mature yeast ribosomes consist of a small (40S) and a large (60S) subunit. The 40S small subunit contains 1 molecule of ribosomal RNA (18S rRNA) and 33 different proteins (encoded by 57 genes). The large 60S subunit contains 3 rRNA molecules (25S, 5.8S and 5S rRNA) and 46 different proteins (encoded by 81 genes). N-terminally acetylated by acetyltransferase NatA.

The protein resides in the cytoplasm. Its function is as follows. Component of the ribosome, a large ribonucleoprotein complex responsible for the synthesis of proteins in the cell. The small ribosomal subunit (SSU) binds messenger RNAs (mRNAs) and translates the encoded message by selecting cognate aminoacyl-transfer RNA (tRNA) molecules. The large subunit (LSU) contains the ribosomal catalytic site termed the peptidyl transferase center (PTC), which catalyzes the formation of peptide bonds, thereby polymerizing the amino acids delivered by tRNAs into a polypeptide chain. The nascent polypeptides leave the ribosome through a tunnel in the LSU and interact with protein factors that function in enzymatic processing, targeting, and the membrane insertion of nascent chains at the exit of the ribosomal tunnel. This chain is Large ribosomal subunit protein eL33A, found in Saccharomyces cerevisiae (strain ATCC 204508 / S288c) (Baker's yeast).